Consider the following 179-residue polypeptide: Large ribosomal subunit protein uL6c (179 aa).

The protein belongs to the universal ribosomal protein uL6 family. As to quaternary structure, part of the 50S ribosomal subunit.

Its subcellular location is the plastid. It localises to the chloroplast. In terms of biological role, binds 23S rRNA. In Guillardia theta (Cryptophyte), this protein is Large ribosomal subunit protein uL6c (rpl6).